The following is a 182-amino-acid chain: uncharacterized protein (182 aa).

The Macro domain occupies 1 to 170 (MIVKIIKGDI…IFVNIFEREL (170 aa)).

This is an uncharacterized protein from Sulfurisphaera tokodaii (strain DSM 16993 / JCM 10545 / NBRC 100140 / 7) (Sulfolobus tokodaii).